A 184-amino-acid chain; its full sequence is Photosystem I assembly protein Ycf4 (184 aa).

The next 2 membrane-spanning stretches (helical) occupy residues Phe-22–Ser-42 and Ile-57–Ser-77.

It belongs to the Ycf4 family.

It is found in the plastid. The protein resides in the chloroplast thylakoid membrane. Functionally, seems to be required for the assembly of the photosystem I complex. This chain is Photosystem I assembly protein Ycf4, found in Aethionema cordifolium (Lebanon stonecress).